A 241-amino-acid chain; its full sequence is Tetraspanin-1 (241 aa).

3 consecutive transmembrane segments (helical) span residues 12-32 (ILFNLLIFLCGAALLAVGIWV), 53-73 (FVNVGYFLIAAGAVLFILGFL), and 89-109 (FFSILLIIFIAEIAGAVVALV). Asn154 is a glycosylation site (N-linked (GlcNAc...) asparagine). The helical transmembrane segment at 212 to 232 (AVTVGGVAVGVAALELAAMVV) threads the bilayer.

Belongs to the tetraspanin (TM4SF) family. As to quaternary structure, interacts with SLC19A2. Interacts with NTRK1/TRKA.

The protein resides in the cell membrane. It is found in the lysosome membrane. Its function is as follows. Structural component of specialized membrane microdomains known as tetraspanin-enriched microdomains (TERMs), which act as platforms for receptor clustering and signaling. Participates thereby in diverse biological functions such as cell signal transduction, adhesion, migration and protein trafficking. Regulates neuronal differentiation in response to NGF by facilitating NGF-mediated activation of NTRK1/TRKA receptor tyrosine kinase and subsequent downstream signaling pathways. Plays a role in the inhibition of TNFalpha-induced apoptosis. Mechanistically, inhibits the NF-kappa-B signaling pathway by blocking phosphorylation of CHUK. Also promotes the stability of the thiamine transporter 1/SLC19A2 in intestinal epithelial cells leading to an increase of thiamine uptake process. This is Tetraspanin-1 (Tspan1) from Rattus norvegicus (Rat).